Reading from the N-terminus, the 146-residue chain is Ribosome-binding factor A (146 aa).

Residues 113–146 (IRDEREAQEPAQDPAQDSSQDASVEASDAPDKAE) are disordered.

This sequence belongs to the RbfA family. Monomer. Binds 30S ribosomal subunits, but not 50S ribosomal subunits or 70S ribosomes.

The protein localises to the cytoplasm. Its function is as follows. One of several proteins that assist in the late maturation steps of the functional core of the 30S ribosomal subunit. Associates with free 30S ribosomal subunits (but not with 30S subunits that are part of 70S ribosomes or polysomes). Required for efficient processing of 16S rRNA. May interact with the 5'-terminal helix region of 16S rRNA. The chain is Ribosome-binding factor A from Gemmatimonas aurantiaca (strain DSM 14586 / JCM 11422 / NBRC 100505 / T-27).